We begin with the raw amino-acid sequence, 538 residues long: Chaperonin GroEL (538 aa).

ATP-binding positions include 29–32 (TLGP), 86–90 (DGTTT), glycine 413, 477–479 (NAA), and aspartate 493.

It belongs to the chaperonin (HSP60) family. In terms of assembly, forms a cylinder of 14 subunits composed of two heptameric rings stacked back-to-back. Interacts with the co-chaperonin GroES.

The protein localises to the cytoplasm. The catalysed reaction is ATP + H2O + a folded polypeptide = ADP + phosphate + an unfolded polypeptide.. Together with its co-chaperonin GroES, plays an essential role in assisting protein folding. The GroEL-GroES system forms a nano-cage that allows encapsulation of the non-native substrate proteins and provides a physical environment optimized to promote and accelerate protein folding. The chain is Chaperonin GroEL from Scardovia inopinata (Bifidobacterium inopinatum).